Here is a 698-residue protein sequence, read N- to C-terminus: Protein SST2 (698 aa).

Positions 10 to 203 are fungal-DR; that stretch reads ELSSKNFSRT…GAKPNVWSPT (194 aa). Phosphoserine is present on serine 252. The DEP domain maps to 273–358; sequence SNAGIRLFEN…SRSSFFTLSK (86 aa). At serine 408 the chain carries Phosphoserine. An RGS domain is found at 420 to 689; it reads KLDYVLTDPG…TQSDVYKDAS (270 aa). Residue serine 539 is modified to Phosphoserine; by MAPK. The disordered stretch occupies residues 545–586; it reads FPTNLYDPSPASAESAASSISSTEADTLGEPPEVSLKPSKNL. Residues 551–570 are compositionally biased toward low complexity; the sequence is DPSPASAESAASSISSTEAD. Serine 587 is subject to Phosphoserine.

Post-translationally, phosphorylated by FUS3 and KSS1.

Its function is as follows. Desensitization to alpha-factor pheromone. Is involved in regulating the signaling pathway for responding to mating pheromone. The chain is Protein SST2 (SST2) from Saccharomyces cerevisiae (strain ATCC 204508 / S288c) (Baker's yeast).